The following is a 1114-amino-acid chain: Isoleucine--tRNA ligase (1114 aa).

The short motif at 61 to 71 (PTANGQPGTHH) is the 'HIGH' region element. The 'KMSKS' region signature appears at 640–644 (KMSKH). Residue lysine 643 coordinates ATP.

It belongs to the class-I aminoacyl-tRNA synthetase family. IleS type 2 subfamily. Monomer. Requires Zn(2+) as cofactor.

The protein localises to the cytoplasm. It carries out the reaction tRNA(Ile) + L-isoleucine + ATP = L-isoleucyl-tRNA(Ile) + AMP + diphosphate. Catalyzes the attachment of isoleucine to tRNA(Ile). As IleRS can inadvertently accommodate and process structurally similar amino acids such as valine, to avoid such errors it has two additional distinct tRNA(Ile)-dependent editing activities. One activity is designated as 'pretransfer' editing and involves the hydrolysis of activated Val-AMP. The other activity is designated 'posttransfer' editing and involves deacylation of mischarged Val-tRNA(Ile). This chain is Isoleucine--tRNA ligase, found in Cutibacterium acnes (strain DSM 16379 / KPA171202) (Propionibacterium acnes).